Here is a 370-residue protein sequence, read N- to C-terminus: 4-hydroxy-3-methylbut-2-en-1-yl diphosphate synthase (flavodoxin) (370 aa).

The [4Fe-4S] cluster site is built by Cys270, Cys273, Cys305, and Glu312.

This sequence belongs to the IspG family. The cofactor is [4Fe-4S] cluster.

It carries out the reaction (2E)-4-hydroxy-3-methylbut-2-enyl diphosphate + oxidized [flavodoxin] + H2O + 2 H(+) = 2-C-methyl-D-erythritol 2,4-cyclic diphosphate + reduced [flavodoxin]. The protein operates within isoprenoid biosynthesis; isopentenyl diphosphate biosynthesis via DXP pathway; isopentenyl diphosphate from 1-deoxy-D-xylulose 5-phosphate: step 5/6. Converts 2C-methyl-D-erythritol 2,4-cyclodiphosphate (ME-2,4cPP) into 1-hydroxy-2-methyl-2-(E)-butenyl 4-diphosphate. The polypeptide is 4-hydroxy-3-methylbut-2-en-1-yl diphosphate synthase (flavodoxin) (Azotobacter vinelandii (strain DJ / ATCC BAA-1303)).